The primary structure comprises 104 residues: N(4)-acetylcytidine amidohydrolase (104 aa).

Positions 7-104 constitute an ASCH domain; sequence TFFTRFEQDI…FWVIAFELVD (98 aa). Lysine 21 functions as the Proton acceptor in the catalytic mechanism. Threonine 24 (nucleophile) is an active-site residue. Glutamate 74 (proton donor) is an active-site residue.

The protein belongs to the N(4)-acetylcytidine amidohydrolase family.

The enzyme catalyses N(4)-acetylcytidine + H2O = cytidine + acetate + H(+). The catalysed reaction is N(4)-acetyl-2'-deoxycytidine + H2O = 2'-deoxycytidine + acetate + H(+). It catalyses the reaction N(4)-acetylcytosine + H2O = cytosine + acetate + H(+). Its function is as follows. Catalyzes the hydrolysis of N(4)-acetylcytidine (ac4C). This chain is N(4)-acetylcytidine amidohydrolase, found in Pasteurella multocida (strain Pm70).